Here is a 160-residue protein sequence, read N- to C-terminus: Cytochrome c-type biogenesis protein CcmE (160 aa).

The Cytoplasmic segment spans residues 1-9 (MRGLKKKRR). A helical; Signal-anchor for type II membrane protein membrane pass occupies residues 10-30 (IQIIAIAAVALTIATIMIGTA). The Periplasmic portion of the chain corresponds to 31-160 (MRDGINFFRS…DGGYGGASGS (130 aa)). Heme contacts are provided by histidine 123 and tyrosine 127. The disordered stretch occupies residues 141-160 (VYKDPNATDADGGYGGASGS).

The protein belongs to the CcmE/CycJ family.

Its subcellular location is the cell inner membrane. Functionally, heme chaperone required for the biogenesis of c-type cytochromes. Transiently binds heme delivered by CcmC and transfers the heme to apo-cytochromes in a process facilitated by CcmF and CcmH. The sequence is that of Cytochrome c-type biogenesis protein CcmE from Dinoroseobacter shibae (strain DSM 16493 / NCIMB 14021 / DFL 12).